Reading from the N-terminus, the 337-residue chain is Transaldolase (337 aa).

A Nuclear localization signal motif is present at residues 1–10; that stretch reads MSGSPVKRQR. Residue Lys142 is the Schiff-base intermediate with substrate of the active site. Lys219 carries the post-translational modification N6-acetyllysine. A phosphoserine mark is found at Ser237 and Ser256. Lys269, Lys286, and Lys321 each carry N6-acetyllysine.

The protein belongs to the transaldolase family. Type 1 subfamily. As to quaternary structure, homodimer. Interacts with KPNA1 and KPNA4.

It is found in the nucleus. The protein resides in the cytoplasm. The catalysed reaction is D-sedoheptulose 7-phosphate + D-glyceraldehyde 3-phosphate = D-erythrose 4-phosphate + beta-D-fructose 6-phosphate. It participates in carbohydrate degradation; pentose phosphate pathway; D-glyceraldehyde 3-phosphate and beta-D-fructose 6-phosphate from D-ribose 5-phosphate and D-xylulose 5-phosphate (non-oxidative stage): step 2/3. Functionally, catalyzes the rate-limiting step of the non-oxidative phase in the pentose phosphate pathway. Catalyzes the reversible conversion of sedheptulose-7-phosphate and D-glyceraldehyde 3-phosphate into erythrose-4-phosphate and beta-D-fructose 6-phosphate. This Sus scrofa (Pig) protein is Transaldolase (TALDO1).